We begin with the raw amino-acid sequence, 1390 residues long: DNA-directed RNA polymerase subunit beta (1390 aa).

It belongs to the RNA polymerase beta chain family. As to quaternary structure, the RNAP catalytic core consists of 2 alpha, 1 beta, 1 beta' and 1 omega subunit. When a sigma factor is associated with the core the holoenzyme is formed, which can initiate transcription.

It carries out the reaction RNA(n) + a ribonucleoside 5'-triphosphate = RNA(n+1) + diphosphate. Its function is as follows. DNA-dependent RNA polymerase catalyzes the transcription of DNA into RNA using the four ribonucleoside triphosphates as substrates. This Methylobacillus flagellatus (strain ATCC 51484 / DSM 6875 / VKM B-1610 / KT) protein is DNA-directed RNA polymerase subunit beta.